We begin with the raw amino-acid sequence, 262 residues long: 2-oxo-tetronate isomerase (262 aa).

Glutamate 143 (proton donor/acceptor) is an active-site residue. Residues glutamate 143, aspartate 178, glutamine 204, and glutamate 240 each contribute to the Mg(2+) site. The Proton donor/acceptor role is filled by glutamate 240.

Belongs to the hyi family. OtnI subfamily.

The catalysed reaction is 2-dehydro-L-erythronate = 3-dehydro-L-erythronate. It carries out the reaction 2-dehydro-D-erythronate = 3-dehydro-D-erythronate. Functionally, catalyzes the isomerization of 2-oxo-tetronate to 3-oxo-tetronate. This Pectobacterium atrosepticum (strain SCRI 1043 / ATCC BAA-672) (Erwinia carotovora subsp. atroseptica) protein is 2-oxo-tetronate isomerase.